An 89-amino-acid polypeptide reads, in one-letter code: Small ribosomal subunit protein uS17 (89 aa).

This sequence belongs to the universal ribosomal protein uS17 family. Part of the 30S ribosomal subunit.

In terms of biological role, one of the primary rRNA binding proteins, it binds specifically to the 5'-end of 16S ribosomal RNA. This chain is Small ribosomal subunit protein uS17, found in Chlorobium chlorochromatii (strain CaD3).